A 284-amino-acid chain; its full sequence is 2-dehydro-3-deoxyphosphooctonate aldolase (284 aa).

This sequence belongs to the KdsA family.

It is found in the cytoplasm. The catalysed reaction is D-arabinose 5-phosphate + phosphoenolpyruvate + H2O = 3-deoxy-alpha-D-manno-2-octulosonate-8-phosphate + phosphate. It functions in the pathway carbohydrate biosynthesis; 3-deoxy-D-manno-octulosonate biosynthesis; 3-deoxy-D-manno-octulosonate from D-ribulose 5-phosphate: step 2/3. Its pathway is bacterial outer membrane biogenesis; lipopolysaccharide biosynthesis. This is 2-dehydro-3-deoxyphosphooctonate aldolase from Proteus mirabilis (strain HI4320).